The chain runs to 43 residues: Seed non-specific lipid transfer protein-like (43 aa).

It belongs to the plant LTP family. In terms of assembly, homodimer.

In terms of biological role, plant non-specific lipid-transfer proteins transfer phospholipids as well as galactolipids across membranes. May play a role in wax or cutin deposition in the cell walls of expanding epidermal cells and certain secretory tissues. This isoform inhibits the hyphal growth of several fungi in vitro. This chain is Seed non-specific lipid transfer protein-like, found in Raphanus sativus (Radish).